A 435-amino-acid chain; its full sequence is Minor fimbrial subunit HifE (435 aa).

The first 31 residues, 1–31 (MKTLTTYAKYFTPISKIAFLFCFLMGNIAEA), serve as a signal peptide directing secretion.

Belongs to the fimbrial protein family.

The protein resides in the fimbrium. Functionally, may be a minor structural protein required for pilus biogenesis. May be the adhesive component in the pili. The sequence is that of Minor fimbrial subunit HifE (hifE) from Haemophilus influenzae.